The sequence spans 187 residues: uncharacterized protein (187 aa).

Residues 26 to 157 enclose the Nudix hydrolase domain; sequence NRHAAVLLPI…YLDVSRRGQQ (132 aa). Residues 64–86 carry the Nudix box motif; the sequence is GVADPKDKSIIATALREAEEEVN. Residues Glu80 and Glu84 each contribute to the Mg(2+) site.

The protein belongs to the Nudix hydrolase family. PCD1 subfamily. Mn(2+) serves as cofactor. Requires Mg(2+) as cofactor.

Probably mediates the hydrolysis of some nucleoside diphosphate derivatives. This is an uncharacterized protein from Photorhabdus laumondii subsp. laumondii (strain DSM 15139 / CIP 105565 / TT01) (Photorhabdus luminescens subsp. laumondii).